A 201-amino-acid polypeptide reads, in one-letter code: Sec-independent protein translocase protein TatB (201 aa).

The helical transmembrane segment at 1-21 (MLDLGWSEILVIAVVLIVVVG) threads the bilayer. The segment at 96 to 201 (LSEAAKAKPA…RRKKTAGTAP (106 aa)) is disordered. 2 stretches are compositionally biased toward low complexity: residues 102–114 (AKPA…AADS) and 159–187 (TSAK…APAK). Residues 189-201 (PSPRRKKTAGTAP) are compositionally biased toward basic residues.

Belongs to the TatB family. As to quaternary structure, the Tat system comprises two distinct complexes: a TatABC complex, containing multiple copies of TatA, TatB and TatC subunits, and a separate TatA complex, containing only TatA subunits. Substrates initially bind to the TatABC complex, which probably triggers association of the separate TatA complex to form the active translocon.

It is found in the cell inner membrane. Its function is as follows. Part of the twin-arginine translocation (Tat) system that transports large folded proteins containing a characteristic twin-arginine motif in their signal peptide across membranes. Together with TatC, TatB is part of a receptor directly interacting with Tat signal peptides. TatB may form an oligomeric binding site that transiently accommodates folded Tat precursor proteins before their translocation. The chain is Sec-independent protein translocase protein TatB from Chelativorans sp. (strain BNC1).